A 344-amino-acid polypeptide reads, in one-letter code: Anthranilate phosphoribosyltransferase (344 aa).

Residues G80, 83–84, T88, 90–93, 108–116, and S120 contribute to the 5-phospho-alpha-D-ribose 1-diphosphate site; these read GD, NVST, and KHGNRSVSS. Anthranilate is bound at residue G80. A Mg(2+)-binding site is contributed by S92. N111 serves as a coordination point for anthranilate. Residue R166 participates in anthranilate binding. Mg(2+) contacts are provided by D225 and E226.

The protein belongs to the anthranilate phosphoribosyltransferase family. Homodimer. Requires Mg(2+) as cofactor.

It carries out the reaction N-(5-phospho-beta-D-ribosyl)anthranilate + diphosphate = 5-phospho-alpha-D-ribose 1-diphosphate + anthranilate. Its pathway is amino-acid biosynthesis; L-tryptophan biosynthesis; L-tryptophan from chorismate: step 2/5. In terms of biological role, catalyzes the transfer of the phosphoribosyl group of 5-phosphorylribose-1-pyrophosphate (PRPP) to anthranilate to yield N-(5'-phosphoribosyl)-anthranilate (PRA). This Legionella pneumophila (strain Lens) protein is Anthranilate phosphoribosyltransferase.